The chain runs to 446 residues: Corrinoid/iron-sulfur protein large subunit (446 aa).

The region spanning 2 to 59 (PLTGLEIYKQLPKKNCGECGTPTCLAFAMNLASGKASLDSCPYVSDAAREALDAAAAP) is the 4Fe-4S domain. [4Fe-4S] cluster is bound by residues Cys-17, Cys-20, Cys-25, and Cys-42. 5-methoxybenzimidazolylcob(I)amide is bound by residues Thr-340, Thr-346, 370–373 (GLSV), and Ala-433.

Heterohexamer composed of 2 subunits of AcsC, 2 subunits of AcsD and 2 subunits of AcsE. The cofactor is [4Fe-4S] cluster.

Acts as a methyl group carrier in the anaerobic acetyl-CoA pathway (Wood-Ljungdahl pathway) of carbon monoxide and carbon dioxide fixation. Binds the corrinoid 5-methoxybenzimidazolylcobamide which is then methylated by the AcsE subunit. This Moorella thermoacetica (Clostridium thermoaceticum) protein is Corrinoid/iron-sulfur protein large subunit (acsC).